Consider the following 183-residue polypeptide: Ribosome-recycling factor (183 aa).

Belongs to the RRF family.

The protein localises to the cytoplasm. In terms of biological role, responsible for the release of ribosomes from messenger RNA at the termination of protein biosynthesis. May increase the efficiency of translation by recycling ribosomes from one round of translation to another. In Clostridium tetani (strain Massachusetts / E88), this protein is Ribosome-recycling factor.